The chain runs to 493 residues: 3-octaprenyl-4-hydroxybenzoate carboxy-lyase (493 aa).

Position 172 (Asn-172) interacts with Mn(2+). Prenylated FMN-binding positions include 175 to 177, 189 to 191, and 194 to 195; these read IYR, RWL, and RG. Glu-238 serves as a coordination point for Mn(2+). Asp-287 (proton donor) is an active-site residue.

The protein belongs to the UbiD family. In terms of assembly, homohexamer. Prenylated FMN is required as a cofactor. The cofactor is Mn(2+).

It localises to the cell membrane. It carries out the reaction a 4-hydroxy-3-(all-trans-polyprenyl)benzoate + H(+) = a 2-(all-trans-polyprenyl)phenol + CO2. The protein operates within cofactor biosynthesis; ubiquinone biosynthesis. Catalyzes the decarboxylation of 3-octaprenyl-4-hydroxy benzoate to 2-octaprenylphenol, an intermediate step in ubiquinone biosynthesis. The polypeptide is 3-octaprenyl-4-hydroxybenzoate carboxy-lyase (Shewanella amazonensis (strain ATCC BAA-1098 / SB2B)).